The primary structure comprises 271 residues: Hydroxyethylthiazole kinase (271 aa).

Met50 lines the substrate pocket. The ATP site is built by Arg126 and Thr172. Position 199 (Gly199) interacts with substrate.

This sequence belongs to the Thz kinase family. Requires Mg(2+) as cofactor.

It carries out the reaction 5-(2-hydroxyethyl)-4-methylthiazole + ATP = 4-methyl-5-(2-phosphooxyethyl)-thiazole + ADP + H(+). The protein operates within cofactor biosynthesis; thiamine diphosphate biosynthesis; 4-methyl-5-(2-phosphoethyl)-thiazole from 5-(2-hydroxyethyl)-4-methylthiazole: step 1/1. In terms of biological role, catalyzes the phosphorylation of the hydroxyl group of 4-methyl-5-beta-hydroxyethylthiazole (THZ). In Akkermansia muciniphila (strain ATCC BAA-835 / DSM 22959 / JCM 33894 / BCRC 81048 / CCUG 64013 / CIP 107961 / Muc), this protein is Hydroxyethylthiazole kinase.